Here is a 269-residue protein sequence, read N- to C-terminus: Centromere protein K (269 aa).

Over residues 1-10 the composition is skewed to acidic residues; it reads MNQEDLDPDS. A disordered region spans residues 1 to 20; sequence MNQEDLDPDSTTDVGDVTNT. 2 coiled-coil regions span residues 22–42 and 98–151; these read EELIRECEEMWKDMEECQNKL and QKLR…NKVE.

The protein belongs to the CENP-K/MCM22 family. As to quaternary structure, component of the CENPA-CAD complex, composed of CENPI, CENPK, CENPL, CENPO, CENPP, CENPQ, CENPR and CENPS. The CENPA-CAD complex interacts with the CENPA-NAC complex, at least composed of CENPA, CENPC, CENPH, CENPM, CENPN, CENPT and CENPU. Interacts directly with CENPH. Detected in several fetal organs with highest levels in fetal liver. In adults, it is weakly expressed in lung and placenta.

It localises to the nucleus. The protein resides in the chromosome. The protein localises to the centromere. Its subcellular location is the kinetochore. In terms of biological role, component of the CENPA-CAD (nucleosome distal) complex, a complex recruited to centromeres which is involved in assembly of kinetochore proteins, mitotic progression and chromosome segregation. May be involved in incorporation of newly synthesized CENPA into centromeres via its interaction with the CENPA-NAC complex. Acts in coordination with KNL1 to recruit the NDC80 complex to the outer kinetochore. In Homo sapiens (Human), this protein is Centromere protein K (CENPK).